Consider the following 241-residue polypeptide: Orotidine 5'-phosphate decarboxylase (241 aa).

Substrate is bound by residues Asp-15, Lys-37, 64 to 73 (DLKYHDIPNT), Thr-126, Arg-187, Gln-196, Gly-216, and Arg-217. Catalysis depends on Lys-66, which acts as the Proton donor.

Belongs to the OMP decarboxylase family. Type 1 subfamily. As to quaternary structure, homodimer.

It catalyses the reaction orotidine 5'-phosphate + H(+) = UMP + CO2. It functions in the pathway pyrimidine metabolism; UMP biosynthesis via de novo pathway; UMP from orotate: step 2/2. In terms of biological role, catalyzes the decarboxylation of orotidine 5'-monophosphate (OMP) to uridine 5'-monophosphate (UMP). In Geotalea uraniireducens (strain Rf4) (Geobacter uraniireducens), this protein is Orotidine 5'-phosphate decarboxylase.